The primary structure comprises 208 residues: Translation initiation factor 6 (208 aa).

It belongs to the eIF-6 family.

In terms of biological role, binds to the 50S ribosomal subunit and prevents its association with the 30S ribosomal subunit to form the 70S initiation complex. This Nanoarchaeum equitans (strain Kin4-M) protein is Translation initiation factor 6 (eif6).